The primary structure comprises 400 residues: MSGRVGDLSPKQAETLAKFRENVQDVLPALPNPDDYFLLRWLRARNFDLQKSEALLRKYMEFRKTMDIDHILDWQPPEVIQKYMPGGLCGYDRDGCPVWYDIIGPLDPKGLLFSVTKQDLLKTKMRDCERILHECDLQTERLGKKIETIVMIFDCEGLGLKHFWKPLVEVYQEFFGLLEENYPETLKFMLIVKATKLFPVGYNLMKPFLSEDTRRKIIVLGNNWKEGLLKLISPEELPAQFGGTLTDPDGNPKCLTKINYGGEIPKSMYVRDQVKTQYEHSVQINRGSSHQVEYEILFPGCVLRWQFSSDGADIGFGVFLKTKMGERQRAGEMTDVLPSQRYNAHMVPEDGNLTCSEAGVYVLRFDNTYSFVHAKKVSFTVEVLLPDEGMQKYDKELTPV.

In terms of domain architecture, CRAL-TRIO spans P76 to D249. The GOLD domain occupies K275–V383.

Its function is as follows. Probable hydrophobic ligand-binding protein; may play a role in the transport of hydrophobic ligands like tocopherol, squalene and phospholipids. The polypeptide is SEC14-like protein 3 (SEC14L3) (Homo sapiens (Human)).